Reading from the N-terminus, the 338-residue chain is Cilia- and flagella-associated protein 36 (338 aa).

A coiled-coil region spans residues 142–179; the sequence is ISDLEQEEMKLVSEALRLSKEEYEREQLRRSAKELNCT. Disordered stretches follow at residues 175-220 and 281-314; these read ELNC…ESPY and KKQE…KKSL. The segment covering 187–202 has biased composition (polar residues); that stretch reads KQSNGSERTPSNTELP. Positions 255 to 330 form a coiled coil; it reads NLSQAEKEQL…AEKLKEEVIL (76 aa).

The protein belongs to the CFAP36 family.

Its subcellular location is the nucleus. The protein localises to the cytoplasm. The protein resides in the cell projection. It is found in the cilium. It localises to the flagellum. The chain is Cilia- and flagella-associated protein 36 from Xenopus laevis (African clawed frog).